Here is a 41-residue protein sequence, read N- to C-terminus: Large ribosomal subunit protein bL36 (41 aa).

This sequence belongs to the bacterial ribosomal protein bL36 family.

This Gluconacetobacter diazotrophicus (strain ATCC 49037 / DSM 5601 / CCUG 37298 / CIP 103539 / LMG 7603 / PAl5) protein is Large ribosomal subunit protein bL36.